A 384-amino-acid polypeptide reads, in one-letter code: Galactokinase (384 aa).

34 to 37 (EHTD) is a substrate binding site. 123–129 (SSGLSSS) contacts ATP. Mg(2+) contacts are provided by S129 and E161. D173 (proton acceptor) is an active-site residue. Y222 serves as a coordination point for substrate.

The protein belongs to the GHMP kinase family. GalK subfamily.

It is found in the cytoplasm. It carries out the reaction alpha-D-galactose + ATP = alpha-D-galactose 1-phosphate + ADP + H(+). It participates in carbohydrate metabolism; galactose metabolism. Its function is as follows. Catalyzes the transfer of the gamma-phosphate of ATP to D-galactose to form alpha-D-galactose-1-phosphate (Gal-1-P). This Actinobacillus pleuropneumoniae (Haemophilus pleuropneumoniae) protein is Galactokinase.